A 231-amino-acid polypeptide reads, in one-letter code: Ferredoxin-type protein NapG (231 aa).

The segment at residues 1–41 (MSRSAKPQNGRRRFLRDVVRTAGGLAAVGVALGLQQQTARA) is a signal peptide (tat-type signal). 4Fe-4S ferredoxin-type domains follow at residues 50 to 81 (GAINENAFASACVRCGQCVQACPYDTLKLATL), 89 to 121 (TPYFVARDIPCEMCEDIPCAKVCPSGALDREIE), 130 to 166 (LAVLVDQENCLNFQGLRCDVCYRECPKIDEAITLELE), and 177 to 208 (FLPTVHSDACTGCGKCEKVCVLEQPAIKVLPL). The [4Fe-4S] cluster site is built by C61, C64, C67, C71, C99, C102, C107, C111, C139, C147, C150, C154, C186, C189, C192, and C196.

It depends on [4Fe-4S] cluster as a cofactor. In terms of processing, exported by the Tat system. The position of the signal peptide cleavage has not been experimentally proven.

The protein resides in the periplasm. In terms of biological role, required for electron transfer from ubiquinol, via NapC, to the periplasmic nitrate reductase NapAB complex. This chain is Ferredoxin-type protein NapG (napG), found in Escherichia coli (strain K12).